Reading from the N-terminus, the 705-residue chain is Variediene synthase (705 aa).

The segment at 9–331 is terpene cyclase; sequence LNSTLSSVVE…RCPRYHPWLC (323 aa). Mg(2+) is bound at residue D100. Residues D100, 186–189, N230, 234–238, and 325–326 each bind substrate; these read RIID, SFDIE, and RY. The DDXXD 1 motif lies at 100-104; the sequence is DNVVE. Positions 230-238 match the NSE/DTE motif; the sequence is NDYFSFDIE. Positions 332–705 are prenyltransferase; that stretch reads KEAASLLHQD…VRLLIHRLKV (374 aa). The span at 349–366 shows a compositional bias: basic and acidic residues; sequence GRKPQALEEYRSRSHSES. The tract at residues 349-374 is disordered; sequence GRKPQALEEYRSRSHSESDLSDASPT. Isopentenyl diphosphate is bound by residues K424, R427, and H456. Mg(2+)-binding residues include D463 and D467. The short motif at 463 to 467 is the DDXXD 2 element; that stretch reads DDIED. R472 is a binding site for dimethylallyl diphosphate. R473 provides a ligand contact to isopentenyl diphosphate. Residues K550, T551, Q589, N596, K605, and K615 each coordinate dimethylallyl diphosphate.

It in the N-terminal section; belongs to the terpene synthase family. The protein in the C-terminal section; belongs to the FPP/GGPP synthase family. Hexamer. Mg(2+) is required as a cofactor.

The enzyme catalyses isopentenyl diphosphate + (2E,6E)-farnesyl diphosphate = (2E,6E,10E)-geranylgeranyl diphosphate + diphosphate. It catalyses the reaction isopentenyl diphosphate + (2E,6E,10E)-geranylgeranyl diphosphate = (2E,6E,10E,14E)-geranylfarnesyl diphosphate + diphosphate. It carries out the reaction (2E,6E,10E)-geranylgeranyl diphosphate = variediene + diphosphate. The catalysed reaction is (2E,6E,10E,14E)-geranylfarnesyl diphosphate = (R,2E)-alpha-cericerene + diphosphate. It participates in secondary metabolite biosynthesis; terpenoid biosynthesis. Functionally, bifunctional terpene synthase that converts dimethylallyl diphosphate (DMAPP) and isopentenyl diphosphate (IPP) into variediene as a single product. The C-terminal prenyltransferase (PT) domain of EvVS catalyzes formation of geranylgeranyl pyrophosphate (GGPP), whereas the N-terminal terpene cyclase (TC) domain catalyzes the cyclization of GGPP to variediene. The PT domain can also synthesize geranylfarnesyl pyrophosphate (GFPP) from the C5 isoprene units in vitro, while the TC domain is able to cyclize GFPP to the sesterterpene (2E)-alpha-cericerene. This is Variediene synthase from Emericella variicolor (Aspergillus stellatus).